The following is a 649-amino-acid chain: L-ornithine N(5)-monooxygenase (649 aa).

FAD contacts are provided by residues 72–80 (EKRGHFAWH) and Q91. K96 contributes to the substrate binding site. Residue V157 participates in FAD binding. NADP(+)-binding positions include 289–292 (AGQS) and R314. Residues 328–331 (NSAA) and N359 contribute to the substrate site. An NADP(+)-binding site is contributed by 359–361 (NYS). The segment at 512-547 (AMQSDAVRSGKSSPGSGSDASSTSSQQTLASENSTE) is disordered. Over residues 520 to 536 (SGKSSPGSGSDASSTSS) the composition is skewed to low complexity. The segment covering 537 to 547 (QQTLASENSTE) has biased composition (polar residues). FAD is bound at residue 569 to 571 (SLL). S572 contributes to the substrate binding site. A disordered region spans residues 585 to 611 (LLQRLPRTRRGTASSAATQPAASTVAS). Over residues 596–611 (TASSAATQPAASTVAS) the composition is skewed to low complexity.

This sequence belongs to the lysine N(6)-hydroxylase/L-ornithine N(5)-oxygenase family. Homotetramer. The cofactor is FAD.

The catalysed reaction is L-ornithine + NADPH + O2 = N(5)-hydroxy-L-ornithine + NADP(+) + H2O. It carries out the reaction L-ornithine + NADH + O2 = N(5)-hydroxy-L-ornithine + NAD(+) + H2O. It participates in siderophore biosynthesis; ferrichrome biosynthesis. Its function is as follows. Catalyzes the conversion of L-ornithine to N(5)-hydroxyornithine, the first step in the biosynthesis of all hydroxamate-containing siderophores, such as ferrichrome. In Mycosarcoma maydis (Corn smut fungus), this protein is L-ornithine N(5)-monooxygenase (SID1).